We begin with the raw amino-acid sequence, 669 residues long: MSDAQQITLLVDGEETKVTTGTTGAELFFERRDVVVARVNGELKDLDQELPEGAEVEGVTIESPDGLNVLRHSTAHVMAQAVQQLRPDAKLGIGPYITDGFYFDFDVAEPFTPEDLKTLEKMMQKIINQNQKFVRRVVSEDEAREAMKNEPYKLELLGKKNEAAEAGEGVNVEVGAGDITIYDNVERKEGTTVWCDLCRGPHLPNTKLISNAFALTRSSSAYWLGNQKNQQLQRIYGTAWPTKDALKAYQERIAEAERRDHRKLGSELDLFSFPDELGSGLPVFHPKGGIIRKEMEDYSRQRHVEAGYEFVYTPHITKGHLYEVSGHLDWYKEGMFPAMHVDAELNEDGTVRKPGQDYYLKPMNCPMHNLIFRSRGRSYRELPLRLFEFGSVYRYEKSGVVHGLTRVRGMTQDDAHIYCTREQMKEELTKTLTFVLDLLKDYGLNDFYLELSTKDPEKYVGEDAAWEEATRTLAEVAQESGLELVPDPGGAAFYGPKISVQAKDALGRTWQMSTIQLDFNLPERFELEFQAADGSRQRPVMIHRALFGSVERFMGVLTEHYAGAFPAWLAPVQVVGIPVAETFNEYMFDVVDQLKAAGIRAEVDTSSDRFPKKIRTASKDKIPFVLIAGGDDAEAGAVSFRFRDGSQDNGVPVAEAVKRITEAVRNRTS.

Residues 3-60 (DAQQITLLVDGEETKVTTGTTGAELFFERRDVVVARVNGELKDLDQELPEGAEVEGVT) form the TGS domain. The tract at residues 260–566 (DHRKLGSELD…LTEHYAGAFP (307 aa)) is catalytic. Zn(2+) is bound by residues C365, H416, and H543.

This sequence belongs to the class-II aminoacyl-tRNA synthetase family. Homodimer. Zn(2+) is required as a cofactor.

It is found in the cytoplasm. It catalyses the reaction tRNA(Thr) + L-threonine + ATP = L-threonyl-tRNA(Thr) + AMP + diphosphate + H(+). Catalyzes the attachment of threonine to tRNA(Thr) in a two-step reaction: L-threonine is first activated by ATP to form Thr-AMP and then transferred to the acceptor end of tRNA(Thr). Also edits incorrectly charged L-seryl-tRNA(Thr). This is Threonine--tRNA ligase from Pseudarthrobacter chlorophenolicus (strain ATCC 700700 / DSM 12829 / CIP 107037 / JCM 12360 / KCTC 9906 / NCIMB 13794 / A6) (Arthrobacter chlorophenolicus).